Consider the following 734-residue polypeptide: Photosystem I P700 chlorophyll a apoprotein A2 (734 aa).

8 helical membrane-spanning segments follow: residues 46 to 69, 135 to 158, 175 to 199, 273 to 291, 330 to 353, 369 to 395, 417 to 439, and 517 to 535; these read IFAS…FHVA, LYTG…LHLQ, LNHH…HVAI, MAHH…GHMY, LHFQ…QHMY, AASY…IFFI, AIIS…LYVH, and FLVH…LILV. C559 and C568 together coordinate [4Fe-4S] cluster. 2 helical membrane passes run 575-596 and 643-665; these read AFYL…YWHW and LSVW…MFLI. Chlorophyll a is bound by residues H654, M662, and Y670. Phylloquinone is bound at residue W671. The chain crosses the membrane as a helical span at residues 707–727; that stretch reads LVGLAHFSVGYIFTYAAFLIA.

This sequence belongs to the PsaA/PsaB family. The PsaA/B heterodimer binds the P700 chlorophyll special pair and subsequent electron acceptors. PSI consists of a core antenna complex that captures photons, and an electron transfer chain that converts photonic excitation into a charge separation. The eukaryotic PSI reaction center is composed of at least 11 subunits. P700 is a chlorophyll a/chlorophyll a' dimer, A0 is one or more chlorophyll a, A1 is one or both phylloquinones and FX is a shared 4Fe-4S iron-sulfur center. serves as cofactor.

It localises to the plastid. It is found in the chloroplast thylakoid membrane. It catalyses the reaction reduced [plastocyanin] + hnu + oxidized [2Fe-2S]-[ferredoxin] = oxidized [plastocyanin] + reduced [2Fe-2S]-[ferredoxin]. PsaA and PsaB bind P700, the primary electron donor of photosystem I (PSI), as well as the electron acceptors A0, A1 and FX. PSI is a plastocyanin-ferredoxin oxidoreductase, converting photonic excitation into a charge separation, which transfers an electron from the donor P700 chlorophyll pair to the spectroscopically characterized acceptors A0, A1, FX, FA and FB in turn. Oxidized P700 is reduced on the lumenal side of the thylakoid membrane by plastocyanin. This is Photosystem I P700 chlorophyll a apoprotein A2 from Acorus calamus (Sweet flag).